Here is a 1223-residue protein sequence, read N- to C-terminus: ATP-dependent DNA helicase P143 (1223 aa).

Positions 692 to 701 (RKCRCVQKIK) match the Nuclear localization signal motif. An ATP-binding site is contributed by 919-926 (GVPLSGKS). Residues 967-981 (TINELKKCSESFFKK) constitute a DNA-binding region (H-T-H motif).

The protein resides in the host nucleus. It carries out the reaction ATP + H2O = ADP + phosphate + H(+). Its function is as follows. Essential for the initiation of viral DNA replication, it may contribute to other functions such as controlling the switch to the late phase and leading to the inhibition of host protein synthesis. Required for late and very late gene expression. The sequence is that of ATP-dependent DNA helicase P143 (P143) from Orgyia pseudotsugata multicapsid polyhedrosis virus (OpMNPV).